The chain runs to 555 residues: Glucose-6-phosphate isomerase (555 aa).

Glutamate 365 (proton donor) is an active-site residue. Catalysis depends on residues histidine 396 and lysine 522.

This sequence belongs to the GPI family.

The protein localises to the cytoplasm. The enzyme catalyses alpha-D-glucose 6-phosphate = beta-D-fructose 6-phosphate. The protein operates within carbohydrate biosynthesis; gluconeogenesis. It functions in the pathway carbohydrate degradation; glycolysis; D-glyceraldehyde 3-phosphate and glycerone phosphate from D-glucose: step 2/4. Its function is as follows. Catalyzes the reversible isomerization of glucose-6-phosphate to fructose-6-phosphate. The polypeptide is Glucose-6-phosphate isomerase (Psychrobacter arcticus (strain DSM 17307 / VKM B-2377 / 273-4)).